We begin with the raw amino-acid sequence, 230 residues long: Thymidylate kinase (230 aa).

Position 20-27 (20-27 (GGEGAGKS)) interacts with ATP.

It belongs to the thymidylate kinase family.

The catalysed reaction is dTMP + ATP = dTDP + ADP. In terms of biological role, phosphorylation of dTMP to form dTDP in both de novo and salvage pathways of dTTP synthesis. In Rhodopseudomonas palustris (strain BisB18), this protein is Thymidylate kinase.